We begin with the raw amino-acid sequence, 290 residues long: Pyridoxal 5'-phosphate synthase subunit PdxS (290 aa).

Asp22 is a binding site for D-ribose 5-phosphate. Lys79 (schiff-base intermediate with D-ribose 5-phosphate) is an active-site residue. Gly151 serves as a coordination point for D-ribose 5-phosphate. Arg163 is a binding site for D-glyceraldehyde 3-phosphate. Residues Gly212 and 233–234 (GS) contribute to the D-ribose 5-phosphate site.

It belongs to the PdxS/SNZ family. In terms of assembly, in the presence of PdxT, forms a dodecamer of heterodimers.

It carries out the reaction aldehydo-D-ribose 5-phosphate + D-glyceraldehyde 3-phosphate + L-glutamine = pyridoxal 5'-phosphate + L-glutamate + phosphate + 3 H2O + H(+). It functions in the pathway cofactor biosynthesis; pyridoxal 5'-phosphate biosynthesis. Its function is as follows. Catalyzes the formation of pyridoxal 5'-phosphate from ribose 5-phosphate (RBP), glyceraldehyde 3-phosphate (G3P) and ammonia. The ammonia is provided by the PdxT subunit. Can also use ribulose 5-phosphate and dihydroxyacetone phosphate as substrates, resulting from enzyme-catalyzed isomerization of RBP and G3P, respectively. This chain is Pyridoxal 5'-phosphate synthase subunit PdxS, found in Clostridium botulinum (strain Loch Maree / Type A3).